Here is a 289-residue protein sequence, read N- to C-terminus: Acetyl-coenzyme A carboxylase carboxyl transferase subunit beta (289 aa).

Positions V28 to S289 constitute a CoA carboxyltransferase N-terminal domain. C32, C35, C51, and C54 together coordinate Zn(2+). The segment at C32 to C54 adopts a C4-type zinc-finger fold.

The protein belongs to the AccD/PCCB family. In terms of assembly, acetyl-CoA carboxylase is a heterohexamer composed of biotin carboxyl carrier protein (AccB), biotin carboxylase (AccC) and two subunits each of ACCase subunit alpha (AccA) and ACCase subunit beta (AccD). Zn(2+) serves as cofactor.

The protein localises to the cytoplasm. The enzyme catalyses N(6)-carboxybiotinyl-L-lysyl-[protein] + acetyl-CoA = N(6)-biotinyl-L-lysyl-[protein] + malonyl-CoA. Its pathway is lipid metabolism; malonyl-CoA biosynthesis; malonyl-CoA from acetyl-CoA: step 1/1. Component of the acetyl coenzyme A carboxylase (ACC) complex. Biotin carboxylase (BC) catalyzes the carboxylation of biotin on its carrier protein (BCCP) and then the CO(2) group is transferred by the transcarboxylase to acetyl-CoA to form malonyl-CoA. The protein is Acetyl-coenzyme A carboxylase carboxyl transferase subunit beta of Bacillus thuringiensis subsp. konkukian (strain 97-27).